Consider the following 25-residue polypeptide: Panurgine R (25 aa).

Intrachain disulfides connect cysteine 8–cysteine 23 and cysteine 11–cysteine 19.

The protein resides in the target cell membrane. Its subcellular location is the secreted. Its function is as follows. Antimicrobial peptide active against Gram-positive bacteria M.luteus (MIC=0.8 uM) and B.subtilis (MIC=1.5 uM). Less active against Gram-negative bacteria E.coli (MIC=32.5 uM) and yeast C.albicans (MIC=18.7 uM). Not active against S.aureus and P.aeruginosa. Has no hemolytic activity against human erythrocytes. Probably acts by disrupting membranes of target cells. The protein is Panurgine R of Panurgus calcaratus (Solitary bee).